Reading from the N-terminus, the 59-residue chain is Cecropin-C type 1 (59 aa).

The signal sequence occupies residues 1–23; the sequence is MNFTKIFVLIAMAALLLVGQSEA.

It localises to the secreted. Its function is as follows. Cecropins have lytic and antibacterial activity against several Gram-positive and Gram-negative bacteria. This Aedes albopictus (Asian tiger mosquito) protein is Cecropin-C type 1 (CECC1).